The primary structure comprises 220 residues: MELYLDTSDVVAVKALSRIFPLAGVTTNPSIIAAGKKPLEVVLPELHEAMGGQGRLFAQVMATTAEGMVNDARKLRSIIADIVVKVPVTTEGLAAIKMLKAEGIPTLGTAVYGAAQGLLSALAGAEYVAPYVNRIDAQGGSGIQTVTDLHQLLKMHAPRAKVLAASFKTPRQALDCLLAGCESITLPLDVAQQMISYPAVDAAVAKFEQDWQGAFGRTSI.

Residue Lys-85 is the Schiff-base intermediate with substrate of the active site.

This sequence belongs to the transaldolase family. Type 3A subfamily. Homodecamer.

The protein resides in the cytoplasm. The catalysed reaction is beta-D-fructose 6-phosphate = dihydroxyacetone + D-glyceraldehyde 3-phosphate. Functionally, catalyzes the reversible formation of fructose 6-phosphate from dihydroxyacetone and D-glyceraldehyde 3-phosphate via an aldolization reaction. The polypeptide is Fructose-6-phosphate aldolase 1 (fsaA) (Escherichia coli O157:H7).